A 471-amino-acid chain; its full sequence is 6-phosphofructo-2-kinase/fructose-2,6-bisphosphatase 1 (471 aa).

S2 bears the N-acetylserine mark. The segment at 2 to 250 (SPEMGELTQT…VYYLMNIHVT (249 aa)) is 6-phosphofructo-2-kinase. S33 is modified (phosphoserine; by PKA). 49–57 (GLPARGKTY) is an ATP binding site. Beta-D-fructose 6-phosphate contacts are provided by R82 and R105. The active site involves D131. Beta-D-fructose 6-phosphate contacts are provided by T133 and R139. S141 carries the post-translational modification Phosphoserine. Residue C161 is part of the active site. 170–175 (NIRQVK) is a binding site for ATP. Beta-D-fructose 6-phosphate contacts are provided by K175, R196, and Y200. The fructose-2,6-bisphosphatase stretch occupies residues 251–471 (PRSIYLCRHG…EALDTVPAHY (221 aa)). Residue R258 participates in beta-D-fructose 2,6-bisphosphate binding. The active-site Tele-phosphohistidine intermediate is the H259. Positions 265, 271, and 308 each coordinate beta-D-fructose 2,6-bisphosphate. The active-site Proton donor/acceptor is E328. Beta-D-fructose 2,6-bisphosphate-binding residues include Y339, R353, K357, Y368, Q394, and R398. 350-353 (FALR) provides a ligand contact to ATP. Residues 394–398 (QAVMR) and Y430 each bind ATP.

In the C-terminal section; belongs to the phosphoglycerate mutase family. In terms of assembly, homodimer. As to expression, liver.

The catalysed reaction is beta-D-fructose 2,6-bisphosphate + H2O = beta-D-fructose 6-phosphate + phosphate. It catalyses the reaction beta-D-fructose 6-phosphate + ATP = beta-D-fructose 2,6-bisphosphate + ADP + H(+). Phosphorylation at Ser-33 inhibits the kinase and activates the bisphosphatase. Functionally, synthesis and degradation of fructose 2,6-bisphosphate. The chain is 6-phosphofructo-2-kinase/fructose-2,6-bisphosphatase 1 from Homo sapiens (Human).